The chain runs to 192 residues: VQ motif-containing protein 22 (192 aa).

Positions alanine 24–serine 38 are enriched in low complexity. The tract at residues alanine 24–proline 65 is disordered. The span at lysine 52 to arginine 62 shows a compositional bias: basic residues. The VQ signature appears at phenylalanine 76–glycine 85. 2 disordered regions span residues phenylalanine 101–proline 135 and phenylalanine 163–glutamine 192. Composition is skewed to low complexity over residues serine 102–serine 114 and alanine 175–glutamine 192.

It is found in the nucleus. Functionally, may function as positive regulator of plant growth. In Arabidopsis thaliana (Mouse-ear cress), this protein is VQ motif-containing protein 22.